Consider the following 197-residue polypeptide: MSHFFAHLSRLKLINRWPLMRNVRTENVSEHSLQVAFVAHALAIIKNRKFSGNVNAERIALLAMYHDASEVITGDLPTPIKYHNPHIAREYKKIEKIAQKKLLEMLPAELQEDFRPILDDSQHTEEEISIVKQADALCAYLKCLEELSAGNSEFNLAKARLEKTLAARHSQEMDYFMTVFVPGFSLSLDEISLDIPD.

Substrate-binding positions include 16 to 17 and His31; that span reads RW. The HD domain occupies 28–140; sequence VSEHSLQVAF…VKQADALCAY (113 aa). Residues His31, His66, and Asp67 each coordinate a divalent metal cation. Residues Asp67, 75 to 78, and Asp135 each bind substrate; that span reads DLPT. Residue Asp135 coordinates a divalent metal cation.

This sequence belongs to the 5DNU family. Homodimer. A divalent metal cation is required as a cofactor.

The protein resides in the cytoplasm. The catalysed reaction is a 2'-deoxyribonucleoside 5'-phosphate + H2O = a 2'-deoxyribonucleoside + phosphate. Its function is as follows. Catalyzes the strictly specific dephosphorylation of 2'-deoxyribonucleoside 5'-monophosphates. This is 5'-deoxynucleotidase yfbR from Photorhabdus temperata.